A 39-amino-acid polypeptide reads, in one-letter code: uncharacterized protein (39 aa).

Polar residues predominate over residues 1 to 16 (MLNIQPTQSIVNNQPK). A disordered region spans residues 1-39 (MLNIQPTQSIVNNQPKSDQKKQKPADLLKEFYDKTGNRN). A compositionally biased stretch (basic and acidic residues) spans 17–39 (SDQKKQKPADLLKEFYDKTGNRN).

This is an uncharacterized protein from Dictyostelium discoideum (Social amoeba).